The primary structure comprises 392 residues: 6-aminohexanoate-dimer hydrolase (392 aa).

Positions 1 to 27 (MNTPTTGSHPARYPSAAAGEPTLDSWQ) are disordered. S112 is a catalytic residue.

It carries out the reaction [N-(6-aminohexanoyl)](n) + H2O = [N-(6-aminohexanoyl)](n-1) + 6-aminohexanoate. The catalysed reaction is N-(6-aminohexanoyl)-6-aminohexanoate + H2O = 2 6-aminohexanoate. Its pathway is xenobiotic degradation; nylon-6 oligomer degradation. In terms of biological role, involved in nylon oligomer degradation. In Paenarthrobacter ureafaciens, this protein is 6-aminohexanoate-dimer hydrolase.